Here is a 276-residue protein sequence, read N- to C-terminus: NAD-capped RNA hydrolase NudC (276 aa).

Arg-82 lines the substrate pocket. Residues Cys-112 and Cys-115 each coordinate Zn(2+). Glu-125 is a binding site for substrate. Zn(2+) contacts are provided by Cys-130 and Cys-133. Substrate is bound at residue Tyr-138. Residues 139 to 262 (PRISPSMIVL…SIARYLIDLY (124 aa)) form the Nudix hydrolase domain. Residues Ala-172, Glu-188, and Glu-192 each coordinate a divalent metal cation. The Nudix box signature appears at 173-194 (GFAEPGESAEDCLVREVREEVA). 206–213 (QCWPFPHS) contacts substrate. Glu-233 lines the a divalent metal cation pocket. Position 255 (Ala-255) interacts with substrate.

The protein belongs to the Nudix hydrolase family. NudC subfamily. As to quaternary structure, homodimer. It depends on Mg(2+) as a cofactor. Mn(2+) is required as a cofactor. The cofactor is Zn(2+).

The catalysed reaction is a 5'-end NAD(+)-phospho-ribonucleoside in mRNA + H2O = a 5'-end phospho-adenosine-phospho-ribonucleoside in mRNA + beta-nicotinamide D-ribonucleotide + 2 H(+). It catalyses the reaction NAD(+) + H2O = beta-nicotinamide D-ribonucleotide + AMP + 2 H(+). It carries out the reaction NADH + H2O = reduced beta-nicotinamide D-ribonucleotide + AMP + 2 H(+). In terms of biological role, mRNA decapping enzyme that specifically removes the nicotinamide adenine dinucleotide (NAD) cap from a subset of mRNAs by hydrolyzing the diphosphate linkage to produce nicotinamide mononucleotide (NMN) and 5' monophosphate mRNA. The NAD-cap is present at the 5'-end of some mRNAs and stabilizes RNA against 5'-processing. Has preference for mRNAs with a 5'-end purine. Catalyzes the hydrolysis of a broad range of dinucleotide pyrophosphates. The chain is NAD-capped RNA hydrolase NudC from Pseudomonas putida (strain GB-1).